A 147-amino-acid polypeptide reads, in one-letter code: Diaminohydroxyphosphoribosylamino-pyrimidine deaminase (147 aa).

The CMP/dCMP-type deaminase domain occupies 1–123 (MNDIFYMKRA…YLKKHGICVK (123 aa)). Zn(2+) is bound at residue His50. Glu52 functions as the Proton donor in the catalytic mechanism. Zn(2+) is bound by residues Cys75 and Cys84.

Belongs to the cytidine and deoxycytidylate deaminase family. The cofactor is Zn(2+).

The enzyme catalyses 2,5-diamino-6-hydroxy-4-(5-phosphoribosylamino)-pyrimidine + H2O + H(+) = 5-amino-6-(5-phospho-D-ribosylamino)uracil + NH4(+). The protein operates within cofactor biosynthesis; riboflavin biosynthesis; 5-amino-6-(D-ribitylamino)uracil from GTP: step 2/4. This Buchnera aphidicola subsp. Acyrthosiphon pisum (strain APS) (Acyrthosiphon pisum symbiotic bacterium) protein is Diaminohydroxyphosphoribosylamino-pyrimidine deaminase (ribD1).